A 678-amino-acid chain; its full sequence is MADMEDLFGSEAESEAERKDSDSGSDSDSDQDNGASGSNASGSESDQDERGDSGQPSNKELFGDDSEEEGAPHHSGSDNHSEQSDNRSEASEERSDHEDNEPSDVDQHSGSEAHNDDDDDDDDEDDDDEGHRSDEGSHHSEAEGSEKAQSDDEKWDGEDKSDQSDDDEKLQNSDDEEREQGSDDEKLQNSADEEEKMQNTDDEDRAQLSDDDRQQLSEEEKGNSDDERPAASDNDEEKQNSDDEDRPQVSDEEKMQNSDDERPQVSDEDRRHSDDEEEQDQKSESARGSDSEDEVLRMKRKNAIPSDSEVDSDTEVPKDNNGTMDLFGGADDISSGSDGEDKPPTPGQPVDENGLPQDQQEEEPIPETRIEVEIPKVNTDLGNDLYFVKLPNFLSVEPRPFDPQYYEDEFEDEEMLDEEGRTRLKLKVENTIRWRMRRDEEGNEIKESNARIVKWSDGSMSLHLGNEVFDVYKAPLQGDHNHLFIRQGTGLQGQAVFKTKLTFRPHSTDSATHRKMTLSLADRCSKTQKIRILPMAGRDPECQRTEMIKKEEERLRASIRRESQQRRMREKQHQRGLSASYLEPDRYDEEEEGEESVSLAAIKNRYKGGIREERARIYSSDSDEGSEEDKAQRLLKAKKLNSDEEGESSGKRKAEDDDKANKKHKKYVISDEEEEEDD.

Residues 1 to 14 (MADMEDLFGSEAES) show a composition bias toward acidic residues. Disordered regions lie at residues 1 to 373 (MADM…IEVE), 559 to 596 (IRRESQQRRMREKQHQRGLSASYLEPDRYDEEEEGEES), and 613 to 678 (ERAR…EEDD). Ala2 carries the N-acetylalanine modification. A phosphoserine mark is found at Ser10 and Ser14. Residues 32–43 (DNGASGSNASGS) are compositionally biased toward low complexity. Ser66 carries the phosphoserine modification. Basic and acidic residues-rich tracts occupy residues 70-97 (GAPHHSGSDNHSEQSDNRSEASEERSDH) and 105-114 (VDQHSGSEAH). The segment covering 115 to 128 (NDDDDDDDDEDDDD) has biased composition (acidic residues). Residues 129–163 (EGHRSDEGSHHSEAEGSEKAQSDDEKWDGEDKSDQ) show a composition bias toward basic and acidic residues. 5 positions are modified to phosphoserine: Ser161, Ser164, Ser173, Ser182, and Ser190. Residues 164 to 178 (SDDDEKLQNSDDEER) show a composition bias toward acidic residues. Over residues 191–204 (ADEEEKMQNTDDED) the composition is skewed to acidic residues. The residue at position 200 (Thr200) is a Phosphothreonine. The span at 205 to 230 (RAQLSDDDRQQLSEEEKGNSDDERPA) shows a compositional bias: basic and acidic residues. Phosphoserine is present on residues Ser209, Ser217, Ser224, Ser232, Ser241, Ser250, Ser258, Ser266, Ser289, Ser291, Ser306, Ser308, and Ser312. Positions 237-297 (EKQNSDDEDR…GSDSEDEVLR (61 aa)) are enriched in basic and acidic residues. Positions 328-337 (GGADDISSGS) are enriched in low complexity. The span at 559–573 (IRRESQQRRMREKQH) shows a compositional bias: basic and acidic residues. Positions 586–595 (RYDEEEEGEE) are enriched in acidic residues. Tyr618 bears the Phosphotyrosine mark. A phosphoserine mark is found at Ser619, Ser620, Ser622, Ser626, and Ser642. Residues 648-660 (SSGKRKAEDDDKA) show a composition bias toward basic and acidic residues. At Ser670 the chain carries Phosphoserine.

Belongs to the LEO1 family. In terms of assembly, component of the PAF1 complex, which consists of CDC73, PAF1, LEO1, CTR9, RTF1 and SKIC8. The PAF1 complex interacts with PHF5A. Interacts with TCEA1, SUPT5H and CTNNB1. Interacts with SETD5.

It is found in the nucleus. Functionally, component of the PAF1 complex (PAF1C) which has multiple functions during transcription by RNA polymerase II and is implicated in regulation of development and maintenance of embryonic stem cell pluripotency. PAF1C associates with RNA polymerase II through interaction with POLR2A CTD non-phosphorylated and 'Ser-2'- and 'Ser-5'-phosphorylated forms and is involved in transcriptional elongation, acting both independently and synergistically with TCEA1 and in cooperation with the DSIF complex and HTATSF1. PAF1C is required for transcription of Hox and Wnt target genes. PAF1C is involved in hematopoiesis and stimulates transcriptional activity of KMT2A/MLL1. PAF1C is involved in histone modifications such as ubiquitination of histone H2B and methylation on histone H3 'Lys-4' (H3K4me3). PAF1C recruits the RNF20/40 E3 ubiquitin-protein ligase complex and the E2 enzyme UBE2A or UBE2B to chromatin which mediate monoubiquitination of 'Lys-120' of histone H2B (H2BK120ub1); UB2A/B-mediated H2B ubiquitination is proposed to be coupled to transcription. PAF1C is involved in mRNA 3' end formation probably through association with cleavage and poly(A) factors. Involved in polyadenylation of mRNA precursors. Connects PAF1C to Wnt signaling. In Rattus norvegicus (Rat), this protein is RNA polymerase-associated protein LEO1 (Leo1).